The chain runs to 465 residues: G1/S-specific cyclin CLN2 (465 aa).

Belongs to the cyclin family.

Essential for the control of the cell cycle at the G1/S (start) transition. Interacts with the CDC28 protein kinase to form MPF. This chain is G1/S-specific cyclin CLN2 (CLN2), found in Candida albicans (Yeast).